Here is a 289-residue protein sequence, read N- to C-terminus: Mas-related G-protein coupled receptor member G (289 aa).

The Extracellular segment spans residues 1–13; sequence MFGLFGLWRTFDS. The helical transmembrane segment at 14-34 threads the bilayer; the sequence is VVFYLTLIVGLGGPVGNGLVL. Residues 35-42 are Cytoplasmic-facing; sequence WNLGFRIK. A helical transmembrane segment spans residues 43 to 63; sequence KGPFSIYLLHLAAADFLFLSC. Topologically, residues 64–78 are extracellular; that stretch reads RVGFSVAQAALGAQD. A helical transmembrane segment spans residues 79-99; the sequence is TLYFVLTFLWFAVGLWLLAAF. Over 100 to 120 the chain is Cytoplasmic; that stretch reads SVERCLSDLFPACYQGCRPRH. Residues 121-141 traverse the membrane as a helical segment; the sequence is ASAVLCALVWTPTLPAVPLPA. Residues 142 to 163 are Extracellular-facing; that stretch reads NACGLLRNSACPLVCPRYHVAS. Residues 164 to 184 form a helical membrane-spanning segment; sequence VTWFLVLARVAWTAGVVLFVW. The Cytoplasmic portion of the chain corresponds to 185 to 195; it reads VTCCSTRPRPR. Residues 196–216 form a helical membrane-spanning segment; the sequence is LYGIVLGALLLLFFCGLPSVF. Residues 217–221 are Extracellular-facing; it reads YWSLQ. Residues 222-242 form a helical membrane-spanning segment; it reads PLLNFLLPVFSPLATLLACVN. Residues 243–289 are Cytoplasmic-facing; the sequence is SSSKPLIYSGLGRQPGKREPLRSVLRRALGEGAELGARGQSLPMGLL.

This sequence belongs to the G-protein coupled receptor 1 family. Mas subfamily.

The protein resides in the cell membrane. Orphan receptor. May regulate nociceptor function and/or development, including the sensation or modulation of pain. This Homo sapiens (Human) protein is Mas-related G-protein coupled receptor member G (MRGPRG).